A 396-amino-acid polypeptide reads, in one-letter code: Probable sugar efflux transporter (396 aa).

The next 12 membrane-spanning stretches (helical) occupy residues 15–35, 51–71, 84–104, 109–129, 137–157, 168–188, 209–229, 245–265, 276–296, 297–317, 333–353, and 365–385; these read VLIMACAGFIFNTTEFVPVAM, GLMMTVYAWTVLIMSLPAMLA, LFIIFIVGHILSVIAWNFWIL, MCIALAHSVFWSITASLVMRI, QALGMLAIGTALATILGLPIG, VTFGIIAVLALSIMFLIIRLL, PLLLWLYVTTAIVISAHFTAY, NFATAVLLVFGFSGIAASLLF, FIVVSMSLLMFSLLLLLFSTE, TIIAMFSLVFIWGIGISCIGL, VATAIYSGIFNAGIGAGALFG, and IGYTGAALGLIGFIIFITTHL.

The protein belongs to the major facilitator superfamily. SotB (TC 2.A.1.2) family.

Its subcellular location is the cell inner membrane. In terms of biological role, involved in the efflux of sugars. The physiological role may be the reduction of the intracellular concentration of toxic sugars or sugar metabolites. The protein is Probable sugar efflux transporter of Haemophilus influenzae (strain PittGG).